The primary structure comprises 679 residues: Methionine--tRNA ligase (679 aa).

Residues C147, C150, C160, and C163 each contribute to the Zn(2+) site. Positions 332-336 (KISTS) match the 'KMSKS' region motif. T335 lines the ATP pocket. One can recognise a tRNA-binding domain in the interval 578–679 (DFMKLDIRVG…REVKPGSEVK (102 aa)).

Belongs to the class-I aminoacyl-tRNA synthetase family. MetG type 1 subfamily. In terms of assembly, homodimer. It depends on Zn(2+) as a cofactor.

The protein resides in the cytoplasm. The enzyme catalyses tRNA(Met) + L-methionine + ATP = L-methionyl-tRNA(Met) + AMP + diphosphate. Its function is as follows. Is required not only for elongation of protein synthesis but also for the initiation of all mRNA translation through initiator tRNA(fMet) aminoacylation. The sequence is that of Methionine--tRNA ligase from Bacteroides fragilis (strain YCH46).